Reading from the N-terminus, the 433-residue chain is D-amino acid dehydrogenase (433 aa).

3 to 17 (VLVLGSGVIGTTSAY) serves as a coordination point for FAD.

This sequence belongs to the DadA oxidoreductase family. Requires FAD as cofactor.

The enzyme catalyses a D-alpha-amino acid + A + H2O = a 2-oxocarboxylate + AH2 + NH4(+). Its pathway is amino-acid degradation; D-alanine degradation; NH(3) and pyruvate from D-alanine: step 1/1. Oxidative deamination of D-amino acids. The protein is D-amino acid dehydrogenase of Pseudomonas syringae pv. syringae (strain B728a).